The following is a 949-amino-acid chain: Sensor histidine kinase RcsC (949 aa).

Residues 1–19 (MKYLASFRTTLKASRYMFR) lie on the Cytoplasmic side of the membrane. A helical transmembrane segment spans residues 20–41 (ALALVLWLLIAFSSVFYIVNAL). The Periplasmic portion of the chain corresponds to 42 to 313 (HQRESEIRQE…PVDKVLERIR (272 aa)). A helical membrane pass occupies residues 314 to 335 (MVILNAILLNVLAGAALFTLAR). The Cytoplasmic portion of the chain corresponds to 336 to 949 (MYERRIFIPA…AERVRKSRES (614 aa)). The PAS domain maps to 357-425 (QFNRKIVASA…VLTSNNTNLQ (69 aa)). The Histidine kinase domain maps to 476-692 (TVSHELRTPL…QFTVRIPLYG (217 aa)). The residue at position 479 (H479) is a Phosphohistidine; by autocatalysis. The 101-residue stretch at 705-805 (SGKRCWLAVR…ARIYLIEMES (101 aa)) folds into the ABL domain. The region spanning 826-940 (MILVVDDHPI…VIKQTLTVYA (115 aa)) is the Response regulatory domain. D875 bears the 4-aspartylphosphate mark.

Belongs to the RcsC family. In terms of assembly, interacts with RcsD. In terms of processing, autophosphorylated. Activation probably requires a transfer of a phosphate group from a His in the transmitter domain to an Asp in the receiver domain.

The protein localises to the cell inner membrane. The catalysed reaction is ATP + protein L-histidine = ADP + protein N-phospho-L-histidine.. Its function is as follows. Component of the Rcs signaling system, which controls transcription of numerous genes. RcsC functions as a membrane-associated protein kinase that phosphorylates RcsD in response to environmental signals. The phosphoryl group is then transferred to the response regulator RcsB. Involved in regulation of K30 capsular polysaccharide synthesis. The protein is Sensor histidine kinase RcsC of Escherichia coli.